A 118-amino-acid polypeptide reads, in one-letter code: Immunoglobulin lambda variable 2-8 (118 aa).

The first 19 residues, 1–19 (MAWALLLLTLLTQGTGSWA), serve as a signal peptide directing secretion. Q20 carries the pyrrolidone carboxylic acid modification. The segment at 20–44 (QSALTQPPSASGSPGQSVTISCTGT) is framework-1. One can recognise an Ig-like domain in the interval 20–118 (QSALTQPPSA…CSSYAGSNNF (99 aa)). Residues C41 and C109 are joined by a disulfide bond. The complementarity-determining-1 stretch occupies residues 45 to 53 (SSDVGGYNY). The interval 54–70 (VSWYQQHPGKAPKLMIY) is framework-2. The complementarity-determining-2 stretch occupies residues 71 to 73 (EVS). A framework-3 region spans residues 74-109 (KRPSGVPDRFSGSKSGNTASLTVSGLQAEDEADYYC). The tract at residues 76–97 (PSGVPDRFSGSKSGNTASLTVS) is disordered. Residues 85–97 (GSKSGNTASLTVS) show a composition bias toward polar residues. The tract at residues 110–118 (SSYAGSNNF) is complementarity-determining-3.

In terms of assembly, immunoglobulins are composed of two identical heavy chains and two identical light chains; disulfide-linked.

The protein resides in the secreted. Its subcellular location is the cell membrane. In terms of biological role, v region of the variable domain of immunoglobulin light chains that participates in the antigen recognition. Immunoglobulins, also known as antibodies, are membrane-bound or secreted glycoproteins produced by B lymphocytes. In the recognition phase of humoral immunity, the membrane-bound immunoglobulins serve as receptors which, upon binding of a specific antigen, trigger the clonal expansion and differentiation of B lymphocytes into immunoglobulins-secreting plasma cells. Secreted immunoglobulins mediate the effector phase of humoral immunity, which results in the elimination of bound antigens. The antigen binding site is formed by the variable domain of one heavy chain, together with that of its associated light chain. Thus, each immunoglobulin has two antigen binding sites with remarkable affinity for a particular antigen. The variable domains are assembled by a process called V-(D)-J rearrangement and can then be subjected to somatic hypermutations which, after exposure to antigen and selection, allow affinity maturation for a particular antigen. The sequence is that of Immunoglobulin lambda variable 2-8 from Homo sapiens (Human).